A 182-amino-acid polypeptide reads, in one-letter code: Large ribosomal subunit protein bL25 (182 aa).

This sequence belongs to the bacterial ribosomal protein bL25 family. CTC subfamily. In terms of assembly, part of the 50S ribosomal subunit; part of the 5S rRNA/L5/L18/L25 subcomplex. Contacts the 5S rRNA. Binds to the 5S rRNA independently of L5 and L18.

In terms of biological role, this is one of the proteins that binds to the 5S RNA in the ribosome where it forms part of the central protuberance. In Borrelia duttonii (strain Ly), this protein is Large ribosomal subunit protein bL25.